Consider the following 86-residue polypeptide: Beta-toxin To4 (86 aa).

An N-terminal signal peptide occupies residues 1–20 (MTRFVLFISCFFLIGMIVEC). An LCN-type CS-alpha/beta domain is found at 21–83 (KDGYLMEYGG…IWNRATNKCG (63 aa)). Disulfide bonds link Cys31-Cys82, Cys35-Cys57, Cys43-Cys63, and Cys47-Cys65. Cys82 is subject to Cysteine amide.

This sequence belongs to the long (4 C-C) scorpion toxin superfamily. Sodium channel inhibitor family. Beta subfamily. As to expression, expressed by the venom gland.

The protein resides in the secreted. In terms of biological role, beta toxins bind voltage-independently at site-4 of sodium channels (Nav) and shift the voltage of activation toward more negative potentials thereby affecting sodium channel activation and promoting spontaneous and repetitive firing. This toxin shows moderate inhibition of Nav1.1/SCN1A, Nav1.2/SCN2A, and Nav1.4/SCN4A, and promotes a left voltage shift on these channels. It exhibits similar potency on Nav1.2/SCN2A and Nav1.4/SCN4A (40-50% peak current inhibition at 0.5 uM), and weaker inhibition on Nav1.2 (20-30% peak current inhibition at 0.5 uM). This chain is Beta-toxin To4, found in Tityus obscurus (Amazonian scorpion).